The following is a 305-amino-acid chain: Aspartate carbamoyltransferase catalytic subunit (305 aa).

Carbamoyl phosphate-binding residues include R56 and T57. K85 is an L-aspartate binding site. Residues R106, H134, and Q137 each coordinate carbamoyl phosphate. L-aspartate is bound by residues R167 and R227. Carbamoyl phosphate is bound by residues L266 and P267.

It belongs to the aspartate/ornithine carbamoyltransferase superfamily. ATCase family. As to quaternary structure, heterooligomer of catalytic and regulatory chains.

The enzyme catalyses carbamoyl phosphate + L-aspartate = N-carbamoyl-L-aspartate + phosphate + H(+). It participates in pyrimidine metabolism; UMP biosynthesis via de novo pathway; (S)-dihydroorotate from bicarbonate: step 2/3. Catalyzes the condensation of carbamoyl phosphate and aspartate to form carbamoyl aspartate and inorganic phosphate, the committed step in the de novo pyrimidine nucleotide biosynthesis pathway. The chain is Aspartate carbamoyltransferase catalytic subunit from Thermoplasma volcanium (strain ATCC 51530 / DSM 4299 / JCM 9571 / NBRC 15438 / GSS1).